The following is an 862-amino-acid chain: Leucine--tRNA ligase (862 aa).

The short motif at 49–59 (PYPSGRIHMGH) is the 'HIGH' region element. The short motif at 625–629 (KMSKS) is the 'KMSKS' region element. K628 is a binding site for ATP.

It belongs to the class-I aminoacyl-tRNA synthetase family.

Its subcellular location is the cytoplasm. The enzyme catalyses tRNA(Leu) + L-leucine + ATP = L-leucyl-tRNA(Leu) + AMP + diphosphate. This chain is Leucine--tRNA ligase, found in Paramagnetospirillum magneticum (strain ATCC 700264 / AMB-1) (Magnetospirillum magneticum).